Consider the following 752-residue polypeptide: Sialidase 85-1.1 (752 aa).

An N-terminal signal peptide occupies residues 1–23 (MSRRVFASAVLLLIVVTMCCGGA). 2 BNR repeats span residues 274–285 (IYSKDNGSTWSL) and 319–330 (YVSRDMGTTWTE). Positions 693–725 (APEPQVKIAPKPAAPAAPAGNEETARETGDGGA) are disordered. Over residues 701–711 (APKPAAPAAPA) the composition is skewed to low complexity.

The protein belongs to the glycosyl hydrolase 33 family.

The enzyme catalyses Hydrolysis of alpha-(2-&gt;3)-, alpha-(2-&gt;6)-, alpha-(2-&gt;8)- glycosidic linkages of terminal sialic acid residues in oligosaccharides, glycoproteins, glycolipids, colominic acid and synthetic substrates.. Its function is as follows. Developmentally regulated neuraminidase implicated in parasite invasion of cells. May contribute to the pathology during T.cruzi infection by cleaving sialic acid from cells of the immune system. The chain is Sialidase 85-1.1 (SA85-1.1) from Trypanosoma cruzi.